Here is a 474-residue protein sequence, read N- to C-terminus: Glutamate--tRNA ligase (474 aa).

Residues 9-19 carry the 'HIGH' region motif; the sequence is PSPTGYLHVGG. The 'KMSKS' region motif lies at 240-244; it reads KLSKR. Residue Lys243 coordinates ATP.

Belongs to the class-I aminoacyl-tRNA synthetase family. Glutamate--tRNA ligase type 1 subfamily. Monomer.

It is found in the cytoplasm. The catalysed reaction is tRNA(Glu) + L-glutamate + ATP = L-glutamyl-tRNA(Glu) + AMP + diphosphate. Functionally, catalyzes the attachment of glutamate to tRNA(Glu) in a two-step reaction: glutamate is first activated by ATP to form Glu-AMP and then transferred to the acceptor end of tRNA(Glu). This chain is Glutamate--tRNA ligase, found in Vibrio vulnificus (strain YJ016).